Here is a 175-residue protein sequence, read N- to C-terminus: MQSQTLLADTPLQSPYVEKQDFRDAMARLGSAVNIITTDGPAGRAGFTASAVCSVTDTPPTLLVCLNRSASVYSVFKQNQTLCVNTLAAEHESLSNLFGGKTPMELRFSAARWSTLATGSPILHGAVVSFDCQIGQIVSVGTHDIFFCQALALTRNDDSHGLAYFDRRYHSLLKQ.

This sequence belongs to the non-flavoprotein flavin reductase family. RutF subfamily.

The catalysed reaction is FMNH2 + NAD(+) = FMN + NADH + 2 H(+). In terms of biological role, catalyzes the reduction of FMN to FMNH2 which is used to reduce pyrimidine by RutA via the Rut pathway. The protein is FMN reductase (NADH) RutF of Serratia proteamaculans (strain 568).